Here is a 273-residue protein sequence, read N- to C-terminus: Undecaprenyl-diphosphatase (273 aa).

The next 9 helical transmembrane spans lie at 1 to 21 (MEPI…FLPV), 39 to 59 (PALF…LIVF), 63 to 83 (LGMM…GIAP), 92 to 112 (LKLA…GLGL), 118 to 138 (LFFS…LLWL), 165 to 185 (GLAV…GLFL), 195 to 215 (FSFL…AVDL), 225 to 245 (ATVL…KVLI), and 252 to 272 (RFYL…WIGM).

Belongs to the UppP family.

It localises to the cell inner membrane. The enzyme catalyses di-trans,octa-cis-undecaprenyl diphosphate + H2O = di-trans,octa-cis-undecaprenyl phosphate + phosphate + H(+). In terms of biological role, catalyzes the dephosphorylation of undecaprenyl diphosphate (UPP). Confers resistance to bacitracin. The protein is Undecaprenyl-diphosphatase of Desulfosudis oleivorans (strain DSM 6200 / JCM 39069 / Hxd3) (Desulfococcus oleovorans).